The primary structure comprises 820 residues: DNA replication helicase (820 aa).

90–97 (GTAGAGKT) provides a ligand contact to ATP.

The protein belongs to the herpesviridae helicase family. In terms of assembly, associates with the primase and the primase-associated factor to form the helicase-primase complex.

Its subcellular location is the host nucleus. In terms of biological role, component of the helicase/primase complex. Unwinds the DNA at the replication forks and generates single-stranded DNA for both leading and lagging strand synthesis. The primase synthesizes short RNA primers on the lagging strand that the polymerase elongates using dNTPs. Possesses helicase-like motifs and therefore may act as the helicase subunit of the complex. The chain is DNA replication helicase from Human herpesvirus 7 (strain JI) (HHV-7).